Consider the following 340-residue polypeptide: Eukaryotic translation initiation factor 3 subunit I (340 aa).

5 WD repeats span residues 8-47 (GHERSLNQIKFNRDGDLLFSVAKDKIVCAWWSANGERLGT), 50-91 (GHQG…KVWD), 150-189 (CTESKATVAGWSYLGKYIIAGHEDGSVSQYDGKTGEQLEN), 194-233 (EFDHQINDIQFSQDRTYFITASKDKSAKLISSRNLAILKT), and 291-330 (GHFGPLNTVDVHPNGTAYASGGEDGYVRVHHFDKPYFDFM).

Belongs to the eIF-3 subunit I family. As to quaternary structure, component of the eukaryotic translation initiation factor 3 (eIF-3) complex.

Its subcellular location is the cytoplasm. Functionally, component of the eukaryotic translation initiation factor 3 (eIF-3) complex, which is involved in protein synthesis of a specialized repertoire of mRNAs and, together with other initiation factors, stimulates binding of mRNA and methionyl-tRNAi to the 40S ribosome. The eIF-3 complex specifically targets and initiates translation of a subset of mRNAs involved in cell proliferation. This chain is Eukaryotic translation initiation factor 3 subunit I (tif34), found in Neosartorya fischeri (strain ATCC 1020 / DSM 3700 / CBS 544.65 / FGSC A1164 / JCM 1740 / NRRL 181 / WB 181) (Aspergillus fischerianus).